A 121-amino-acid chain; its full sequence is UPF0102 protein BVU_1879 (121 aa).

The protein belongs to the UPF0102 family.

The sequence is that of UPF0102 protein BVU_1879 from Phocaeicola vulgatus (strain ATCC 8482 / DSM 1447 / JCM 5826 / CCUG 4940 / NBRC 14291 / NCTC 11154) (Bacteroides vulgatus).